We begin with the raw amino-acid sequence, 215 residues long: UPF0502 protein YceH (215 aa).

The protein belongs to the UPF0502 family.

The chain is UPF0502 protein YceH from Salmonella heidelberg (strain SL476).